Reading from the N-terminus, the 803-residue chain is Ubiquitin carboxyl-terminal hydrolase 45 (803 aa).

A disordered region spans residues 1 to 34 (MRLKDPFSLKTADMTKRSNKPKKPRDEDSSDEVG). The UBP-type zinc finger occupies 36-153 (LTCQHVSRAV…QTLDFLQKQS (118 aa)). 12 residues coordinate Zn(2+): Cys-38, His-40, Cys-62, Cys-65, Cys-85, Cys-88, Cys-93, His-100, His-104, His-113, Cys-126, and Cys-129. The USP domain maps to 192-802 (KGINNLGNTC…QAYLLFYEEL (611 aa)). Cys-201 functions as the Nucleophile in the catalytic mechanism. The disordered stretch occupies residues 394–554 (PTNPARLGKS…LPSIRPQQGG (161 aa)). Residues 403–417 (SGREQDSLTSHDDSL) show a composition bias toward basic and acidic residues. Composition is skewed to polar residues over residues 419-440 (AHSQANRNSRRLSGQKLQSRHS) and 469-480 (SYRTDTMGSQSD). A compositionally biased stretch (low complexity) spans 502–531 (SEWSPRIPSVSSHSSTSDKTSITTTLSTTT). Residues 532–545 (HNPSLKSNPSSTPL) are compositionally biased toward polar residues. Residue His-739 is the Proton acceptor of the active site.

The protein belongs to the peptidase C19 family. In terms of tissue distribution, retina.

Its subcellular location is the photoreceptor inner segment. The protein resides in the cytoplasm. It is found in the nucleus. It carries out the reaction Thiol-dependent hydrolysis of ester, thioester, amide, peptide and isopeptide bonds formed by the C-terminal Gly of ubiquitin (a 76-residue protein attached to proteins as an intracellular targeting signal).. Catalyzes the deubiquitination of SPDL1. Plays a role in the repair of UV-induced DNA damage via deubiquitination of ERCC1, promoting its recruitment to DNA damage sites. May be involved in the maintenance of photoreceptor function. May play a role in normal retinal development. The chain is Ubiquitin carboxyl-terminal hydrolase 45 from Danio rerio (Zebrafish).